Consider the following 258-residue polypeptide: NH(3)-dependent NAD(+) synthetase (258 aa).

34-41 (GLSGGIDS) is a binding site for ATP. Aspartate 40 is a binding site for Mg(2+). A deamido-NAD(+)-binding site is contributed by arginine 116. Threonine 136 contributes to the ATP binding site. Glutamate 141 contributes to the Mg(2+) binding site. Residues lysine 165 and serine 187 each contribute to the ATP site.

The protein belongs to the NAD synthetase family. Homodimer.

It catalyses the reaction deamido-NAD(+) + NH4(+) + ATP = AMP + diphosphate + NAD(+) + H(+). It participates in cofactor biosynthesis; NAD(+) biosynthesis; NAD(+) from deamido-NAD(+) (ammonia route): step 1/1. In terms of biological role, catalyzes the ATP-dependent amidation of deamido-NAD to form NAD. Uses ammonia as a nitrogen source. This Fusobacterium nucleatum subsp. nucleatum (strain ATCC 25586 / DSM 15643 / BCRC 10681 / CIP 101130 / JCM 8532 / KCTC 2640 / LMG 13131 / VPI 4355) protein is NH(3)-dependent NAD(+) synthetase.